We begin with the raw amino-acid sequence, 200 residues long: Kunitz type trypsin inhibitor 111 (200 aa).

The first 24 residues, 1–24, serve as a signal peptide directing secretion; sequence MSTISFTIFILANVWLLVVTTSIA. 3 cysteine pairs are disulfide-bonded: cysteine 62-cysteine 108, cysteine 160-cysteine 172, and cysteine 165-cysteine 168.

Belongs to the protease inhibitor I3 (leguminous Kunitz-type inhibitor) family. As to quaternary structure, interacts with SCP1.

It is found in the secreted. The protein localises to the extracellular space. The protein resides in the apoplast. In Medicago truncatula (Barrel medic), this protein is Kunitz type trypsin inhibitor 111 (KPI111).